Consider the following 923-residue polypeptide: Lysosomal acid alpha-glucosidase (923 aa).

The signal sequence occupies residues 1–17 (MKHQVLLPLLVTTAIIA). Residues 18–36 (GSVGVYTHSKPLLGQSQDQ) constitute a propeptide that is removed on maturation. Residues N65, N405, and N440 are each glycosylated (N-linked (GlcNAc...) asparagine). D455 serves as the catalytic Nucleophile. E458 is an active-site residue. The active-site Proton donor is D585. N-linked (GlcNAc...) asparagine glycans are attached at residues N586, N621, N646, N848, N908, and N912.

This sequence belongs to the glycosyl hydrolase 31 family.

It is found in the lysosome. The protein resides in the secreted. The enzyme catalyses Hydrolysis of terminal, non-reducing (1-&gt;4)-linked alpha-D-glucose residues with release of alpha-D-glucose.. Essential for the degradation of glycogen to glucose in lysosomes. Has both alpha-1,4 and alpha-1,6-glucosidase activity. The polypeptide is Lysosomal acid alpha-glucosidase (Tetrahymena pyriformis).